Here is a 193-residue protein sequence, read N- to C-terminus: MGVDLTGVQKKKRVVRHHTYSTNPYIKLLIKLYKFLAQRTNSAFNKLVHQRLLKSRSNRAPISLSRIAVCMKRKSVWLEKGKKAPIAVIVGDVLDDVRMARIPALRVCALRFSKSARERITGAGGECLTFDQLAMVAPTGKNTFLLRGRKSGRESVKHFGAAGVPGSHAKPFTSNRGKERQRSSARRRAFRHK.

Residues 158-193 are disordered; sequence HFGAAGVPGSHAKPFTSNRGKERQRSSARRRAFRHK. The span at 183 to 193 shows a compositional bias: basic residues; sequence SSARRRAFRHK.

The protein belongs to the eukaryotic ribosomal protein eL18 family.

It localises to the cytoplasm. This Trypanosoma cruzi (strain CL Brener) protein is Large ribosomal subunit protein eL18 (RPL18).